The sequence spans 320 residues: uncharacterized protein (320 aa).

Interacts with VP1054, VP39 and VP80.

It localises to the virion. Its subcellular location is the host nucleus. The protein resides in the host cytoplasm. Functionally, plays a role in nucleocapsid assembly and is essential for viral replication. Distributed over the cylindrical capsid sheath of nucleocapsid. This is an uncharacterized protein from Lepidoptera (butterflies and moths).